The sequence spans 212 residues: MEAQYQSTNFLLQKVQHDLGRLEGTQNEQDAQVVVQSIYGDISTLKDNLQALDNYVSREQPARRQAARMRVDQLRMDVQRVDMAVSAVHTRMTQRWRSASEREELLSARYRPNDTALSIGDHELQLNDRLHSSHNRLDELISQGSAVLDNLKSQHFSLRGVSRKMHDIGQALGLSNSTLQVIDRRVREDWIFVIGCIVCCIFMYAFYRFWRG.

The Cytoplasmic portion of the chain corresponds to methionine 1 to aspartate 189. The chain crosses the membrane as a helical; Anchor for type IV membrane protein span at residues tryptophan 190–tryptophan 210. Residues arginine 211 to glycine 212 lie on the Vesicular side of the membrane.

This sequence belongs to the GOSR2 family. Part of a unique SNARE complex.

The protein localises to the golgi apparatus. It is found in the cis-Golgi network membrane. It localises to the golgi apparatus membrane. The protein resides in the endoplasmic reticulum membrane. Involved in transport of proteins from the cis/medial-Golgi to the trans-Golgi network. The sequence is that of Golgi SNAP receptor complex member 2 homolog memb-1 from Caenorhabditis briggsae.